The following is a 334-amino-acid chain: Heat-inducible transcription repressor HrcA (334 aa).

Belongs to the HrcA family.

Its function is as follows. Negative regulator of class I heat shock genes (grpE-dnaK-dnaJ and groELS operons). Prevents heat-shock induction of these operons. In Bordetella bronchiseptica (strain ATCC BAA-588 / NCTC 13252 / RB50) (Alcaligenes bronchisepticus), this protein is Heat-inducible transcription repressor HrcA.